Here is a 360-residue protein sequence, read N- to C-terminus: Venom serine protease Bi-VSP (360 aa).

Positions 1–26 are cleaved as a signal peptide; that stretch reads MTGSKMLFACLALIAFLHPLVHVASA. Residues 27 to 113 constitute a propeptide that is removed on maturation; sequence QECTTPNNKA…CGFSNVSHTR (87 aa). Residues 28 to 79 enclose the Clip domain; the sequence is ECTTPNNKAGKCLGIRVCKPLLEMLQTQGHAAADFLRQSVCKYENNNPIVCC. Cystine bridges form between Cys29-Cys78, Cys39-Cys68, Cys45-Cys79, Cys104-Cys230, Cys147-Cys163, Cys278-Cys296, and Cys307-Cys335. Residue Asn108 is glycosylated (N-linked (GlcNAc...) asparagine). A Peptidase S1 domain is found at 114-360; the sequence is VVGGKPAVLG…LDDFILPAMQ (247 aa). His162 acts as the Charge relay system in catalysis. Asp176, Asn178, Arg181, and Asp184 together coordinate Ca(2+). Residue Asp210 is the Charge relay system of the active site. Ser311 (charge relay system) is an active-site residue.

Belongs to the peptidase S1 family. CLIP subfamily. In terms of tissue distribution, expressed by the venom gland.

It is found in the secreted. In terms of biological role, multifunctional venom serine protease. In insects, it acts as an arthropod prophenoloxidase-activating factor, thereby triggering the phenoloxidase cascade. When injected into larvae, it induces a lethal melanization response in target insects by modulating the innate immune response. In mammals, it converts fibrinogen into fibrin, activates prothrombin, and also degrades fibrin. In mammal, it may act in a cooperative manner with the serine protease inhibitor Bi-KTI (AC G3LH89) to promote the spread of bee venom under anti-bleeding conditions. In Bombus ignitus (Bumblebee), this protein is Venom serine protease Bi-VSP.